Consider the following 677-residue polypeptide: Transmembrane and coiled-coil domain-containing protein 3 (677 aa).

A signal peptide spans 1–22 (MKVLGRSFFWVLFPVLPWAVQA). The stretch at 124–204 (DYKDVVNMKE…EEEIEEHAFD (81 aa)) forms a coiled coil. 2 N-linked (GlcNAc...) asparagine glycosylation sites follow: asparagine 206 and asparagine 230. The next 10 helical transmembrane spans lie at 286-306 (WLCT…GVLL), 317-337 (IVQV…LVGL), 350-370 (ISLQ…LLWG), 416-436 (VLLG…AVMP), 456-476 (ILVL…LCLV), 498-518 (EILI…TELL), 554-574 (FLAI…FVAY), 578-598 (VLVF…ALVL), 608-628 (YIKW…FVLG), and 640-660 (EVYL…PVLW).

The protein belongs to the monovalent cation:proton antiporter 2 (CPA2) transporter (TC 2.A.37) family. As to expression, expressed in the cornea, lens capsule and choroid-retinal pigment epithelium (at protein level).

It localises to the membrane. Probable Na(+)/H(+) antiporter. In Homo sapiens (Human), this protein is Transmembrane and coiled-coil domain-containing protein 3 (TMCO3).